The chain runs to 2476 residues: Transcriptional regulator ATRX (2476 aa).

K10 is covalently cross-linked (Glycyl lysine isopeptide (Lys-Gly) (interchain with G-Cter in SUMO2)). Residues H24–D154 are disordered. A phosphoserine mark is found at S25 and S34. Residues M40 to M57 show a composition bias toward polar residues. The span at E58–R72 shows a compositional bias: basic and acidic residues. Y89 is subject to Phosphotyrosine. A Phosphoserine modification is found at S92. Over residues T98–A107 the composition is skewed to basic and acidic residues. Residues T108 to P121 are compositionally biased toward polar residues. A Phosphoserine modification is found at S111. Residues N134–D154 are compositionally biased toward basic and acidic residues. Residues K137 and K141 each participate in a glycyl lysine isopeptide (Lys-Gly) (interchain with G-Cter in SUMO2) cross-link. The ADD domain maps to K158–K295. The segment at S169 to S205 adopts a GATA-type; atypical zinc-finger fold. Residue S212 is modified to Phosphoserine. The PHD-type; atypical zinc-finger motif lies at D216–P271. K298 is covalently cross-linked (Glycyl lysine isopeptide (Lys-Gly) (interchain with G-Cter in SUMO2)). S315 is modified (phosphoserine). Disordered stretches follow at residues E427–Y451, S466–M507, and E525–S568. Residue K439 forms a Glycyl lysine isopeptide (Lys-Gly) (interchain with G-Cter in SUMO2) linkage. Basic and acidic residues predominate over residues S466–S494. The span at E549–S559 shows a compositional bias: polar residues. Positions K573 to S586 match the PxVxL motif motif. Phosphothreonine is present on T583. 2 disordered regions span residues V585–I877 and P893–K1464. A phosphoserine mark is found at S586, S590, S626, S663, S665, S717, and S719. Residues S615–N630 show a composition bias toward basic and acidic residues. Polar residues predominate over residues M732–Q746. Phosphoserine occurs at positions 766, 801, 828, 829, 854, 855, and 871. Positions S819 to T849 are enriched in basic and acidic residues. Over residues G899–K922 the composition is skewed to basic and acidic residues. Residues E923–K937 show a composition bias toward basic residues. Residues S941 and S953 each carry the phosphoserine modification. Basic and acidic residues predominate over residues G943–Q963. Residues S964–K973 are compositionally biased toward basic residues. Basic and acidic residues predominate over residues K974 to E988. K984 participates in a covalent cross-link: Glycyl lysine isopeptide (Lys-Gly) (interchain with G-Cter in SUMO2). Phosphoserine is present on residues S991, S992, S993, and S1041. Over residues D1031–K1061 the composition is skewed to basic and acidic residues. A compositionally biased stretch (basic residues) spans T1062 to F1074. R1063 is subject to Citrulline. Composition is skewed to basic and acidic residues over residues K1083–L1096 and S1103–K1129. The segment covering K1146–R1175 has biased composition (basic residues). The interval L1169–S1313 is interaction with DAXX. Phosphoserine is present on residues S1223, S1224, and S1232. The segment covering P1246 to K1260 has biased composition (basic and acidic residues). Positions S1265–D1276 are enriched in acidic residues. Residues S1309, S1311, and S1313 each carry the phosphoserine modification. The segment covering P1321–L1332 has biased composition (basic residues). Residues S1335 and S1339 each carry the phosphoserine modification. 2 stretches are compositionally biased toward basic and acidic residues: residues G1340–G1355 and K1395–R1404. Basic residues predominate over residues Y1406–I1415. A compositionally biased stretch (basic and acidic residues) spans K1416–G1436. Over residues D1437–D1453 the composition is skewed to acidic residues. Residue K1473 forms a Glycyl lysine isopeptide (Lys-Gly) (interchain with G-Cter in SUMO2) linkage. S1512 carries the post-translational modification Phosphoserine. T1514 carries the post-translational modification Phosphothreonine. Positions K1566 to N1753 constitute a Helicase ATP-binding domain. H1579 to T1586 is a binding site for ATP. The short motif at D1704–H1707 is the DEGH box element. Phosphoserine occurs at positions 1891 and 1898. A disordered region spans residues S1898 to P1982. Residues E1902 to K1913 are compositionally biased toward basic and acidic residues. Residue K1965 forms a Glycyl lysine isopeptide (Lys-Gly) (interchain with G-Cter in SUMO1); alternate linkage. K1965 is covalently cross-linked (Glycyl lysine isopeptide (Lys-Gly) (interchain with G-Cter in SUMO2); alternate). Residue K1970 forms a Glycyl lysine isopeptide (Lys-Gly) (interchain with G-Cter in SUMO2) linkage. Low complexity predominate over residues T1971 to P1982. A phosphoserine mark is found at S1975 and S1979. Residues D1993–A2263 are interaction with MECP2. The region spanning E2008 to T2188 is the Helicase C-terminal domain. S2203 carries the phosphoserine modification. A disordered region spans residues S2445–M2476. Residues Q2451–T2462 are compositionally biased toward pro residues. Residues R2457 and R2464 each carry the omega-N-methylarginine modification.

Belongs to the SNF2/RAD54 helicase family. Interacts with DAXX to form the chromatin remodeling complex ATRX:DAXX. Probably binds EZH2. Binds annexin V in a calcium and phosphatidylcholine/phosphatidylserine-dependent manner. Interacts directly with CBX5 via the PxVxL motif. Interacts with RAD50, MRE11 and NBN; indicative for an association with the MRN complex. Interacts with histone MACROH2A1. Interacts with histone H3 peptides methylated at 'Lys-10' with preferences H3K9me3 &gt; H3K9me2 &gt; H3K9me1. Interacts with histone H3 peptides unmethylated at 'Lys-5' (H3K4me0). Interacts with MECP2, SMC1 and SMC3. Interacts with SETDB1, TRIM28 and ZNF274. Post-translationally, citrullinated by PADI4.

It is found in the nucleus. Its subcellular location is the chromosome. The protein localises to the telomere. It localises to the PML body. The enzyme catalyses ATP + H2O = ADP + phosphate + H(+). Its function is as follows. Involved in transcriptional regulation and chromatin remodeling. Facilitates DNA replication in multiple cellular environments and is required for efficient replication of a subset of genomic loci. Binds to DNA tandem repeat sequences in both telomeres and euchromatin and in vitro binds DNA quadruplex structures. May help stabilizing G-rich regions into regular chromatin structures by remodeling G4 DNA and incorporating H3.3-containing nucleosomes. Catalytic component of the chromatin remodeling complex ATRX:DAXX which has ATP-dependent DNA translocase activity and catalyzes the replication-independent deposition of histone H3.3 in pericentric DNA repeats outside S-phase and telomeres, and the in vitro remodeling of H3.3-containing nucleosomes. Its heterochromatin targeting is proposed to involve a combinatorial readout of histone H3 modifications (specifically methylation states of H3K9 and H3K4) and association with CBX5. Involved in maintaining telomere structural integrity in embryonic stem cells probably implying recruitment of CBX5 to telomeres. Reports on the involvement in transcriptional regulation of telomeric repeat-containing RNA (TERRA) are conflicting; according is required for its transcriptional repression in embryonic stem cells. Acts as a negative regulator of chromatin incorporation of transcriptionally repressive histone MACROH2A1, particularily at telomeres. Participates in the allele-specific gene expression at the imprinted IGF2/H19 gene locus. On the maternal allele, required for the chromatin occupancy of SMC1 and CTCTF within the H19 imprinting control region (ICR) and involved in esatblishment of histone tails modifications in the ICR. Binds to zinc-finger coding genes with atypical chromatin signatures and regulates its H3K9me3 levels. Forms a complex with ZNF274, TRIM28 and SETDB1 to facilitate the deposition and maintenance of H3K9me3 at the 3' exons of zinc-finger genes. This Mus musculus (Mouse) protein is Transcriptional regulator ATRX (Atrx).